The following is a 684-amino-acid chain: Threonine--tRNA ligase (684 aa).

The 64-residue stretch at methionine 1–alanine 64 folds into the TGS domain. Positions aspartate 261–proline 567 are catalytic. Cysteine 366, histidine 417, and histidine 544 together coordinate Zn(2+).

It belongs to the class-II aminoacyl-tRNA synthetase family. Homodimer. Requires Zn(2+) as cofactor.

It localises to the cytoplasm. The enzyme catalyses tRNA(Thr) + L-threonine + ATP = L-threonyl-tRNA(Thr) + AMP + diphosphate + H(+). Its function is as follows. Catalyzes the attachment of threonine to tRNA(Thr) in a two-step reaction: L-threonine is first activated by ATP to form Thr-AMP and then transferred to the acceptor end of tRNA(Thr). Also edits incorrectly charged L-seryl-tRNA(Thr). In Mycobacteroides abscessus (strain ATCC 19977 / DSM 44196 / CCUG 20993 / CIP 104536 / JCM 13569 / NCTC 13031 / TMC 1543 / L948) (Mycobacterium abscessus), this protein is Threonine--tRNA ligase.